The sequence spans 299 residues: Tyrosine recombinase XerC (299 aa).

A Core-binding (CB) domain is found at 1–85 (MKRQLEAYCA…AVRGLYRYLN (85 aa)). Residues 106–285 (RLPKVLDTDR…DFQHLAAVYD (180 aa)) enclose the Tyr recombinase domain. Residues Arg146, Lys170, His237, Arg240, and His263 contribute to the active site. Tyr272 (O-(3'-phospho-DNA)-tyrosine intermediate) is an active-site residue.

The protein belongs to the 'phage' integrase family. XerC subfamily. In terms of assembly, forms a cyclic heterotetrameric complex composed of two molecules of XerC and two molecules of XerD.

It localises to the cytoplasm. Site-specific tyrosine recombinase, which acts by catalyzing the cutting and rejoining of the recombining DNA molecules. The XerC-XerD complex is essential to convert dimers of the bacterial chromosome into monomers to permit their segregation at cell division. It also contributes to the segregational stability of plasmids. The protein is Tyrosine recombinase XerC of Pseudomonas putida (strain ATCC 47054 / DSM 6125 / CFBP 8728 / NCIMB 11950 / KT2440).